Consider the following 202-residue polypeptide: Ribosome maturation factor RimM (202 aa).

Positions 100-195 constitute a PRC barrel domain; the sequence is ADEWYPKDLI…YLTLDPPGGL (96 aa).

Belongs to the RimM family. Binds ribosomal protein uS19.

It localises to the cytoplasm. An accessory protein needed during the final step in the assembly of 30S ribosomal subunit, possibly for assembly of the head region. Essential for efficient processing of 16S rRNA. May be needed both before and after RbfA during the maturation of 16S rRNA. It has affinity for free ribosomal 30S subunits but not for 70S ribosomes. This chain is Ribosome maturation factor RimM, found in Bifidobacterium longum (strain NCC 2705).